Reading from the N-terminus, the 487-residue chain is Aromatic-L-amino-acid decarboxylase (487 aa).

Position 1 is an N-acetylmethionine (methionine 1). Repeat copies occupy residues 58–115 (EDIE…TELE) and 118–178 (MMDW…MQAA). The 2 X approximate tandem repeats stretch occupies residues 58–178 (EDIEKIIMPG…AASPELMQAA (121 aa)). Position 82 (threonine 82) interacts with substrate. Residues alanine 148 and serine 149 each contribute to the pyridoxal 5'-phosphate site. Histidine 192 contacts substrate. Threonine 246 and asparagine 300 together coordinate pyridoxal 5'-phosphate. Lysine 303 is subject to N6-(pyridoxal phosphate)lysine.

This sequence belongs to the group II decarboxylase family. As to quaternary structure, homodimer. The cofactor is pyridoxal 5'-phosphate.

The catalysed reaction is L-dopa + H(+) = dopamine + CO2. It catalyses the reaction 5-hydroxy-L-tryptophan + H(+) = serotonin + CO2. It functions in the pathway catecholamine biosynthesis; dopamine biosynthesis; dopamine from L-tyrosine: step 2/2. In terms of biological role, catalyzes the decarboxylation of L-3,4-dihydroxyphenylalanine (DOPA) to dopamine and L-5-hydroxytryptophan to serotonin. In Bos taurus (Bovine), this protein is Aromatic-L-amino-acid decarboxylase (DDC).